The chain runs to 297 residues: uncharacterized protein (297 aa).

Helical transmembrane passes span 26-48 (FVLHGLSVIAVSIATLLSAIYAI), 80-102 (NIELLGVTFVFGLVIVAALAALF), 134-156 (LFKFELILTLLIGIAFIPLINLG), 185-205 (LGIFAITIQFLFTFVPYAIVI), 225-247 (LVDTIIMWLLVGLAGMALQVAAY), and 262-284 (LVAVILGWVAVMPITTCWWVELY).

It is found in the cell membrane. This is an uncharacterized protein from Archaeoglobus fulgidus (strain ATCC 49558 / DSM 4304 / JCM 9628 / NBRC 100126 / VC-16).